The primary structure comprises 360 residues: Histidinol-phosphate aminotransferase (360 aa).

K211 carries the post-translational modification N6-(pyridoxal phosphate)lysine.

It belongs to the class-II pyridoxal-phosphate-dependent aminotransferase family. Histidinol-phosphate aminotransferase subfamily. Homodimer. Pyridoxal 5'-phosphate is required as a cofactor.

It catalyses the reaction L-histidinol phosphate + 2-oxoglutarate = 3-(imidazol-4-yl)-2-oxopropyl phosphate + L-glutamate. Its pathway is amino-acid biosynthesis; L-histidine biosynthesis; L-histidine from 5-phospho-alpha-D-ribose 1-diphosphate: step 7/9. The polypeptide is Histidinol-phosphate aminotransferase (Sodalis glossinidius (strain morsitans)).